The sequence spans 367 residues: Type II methyltransferase M.CviJI (367 aa).

Positions 3 to 367 constitute an SAM-dependent MTase C5-type domain; sequence FRTLELFAGI…EYLGYLVQYD (365 aa). Cysteine 73 is an active-site residue.

Belongs to the class I-like SAM-binding methyltransferase superfamily. C5-methyltransferase family.

The catalysed reaction is a 2'-deoxycytidine in DNA + S-adenosyl-L-methionine = a 5-methyl-2'-deoxycytidine in DNA + S-adenosyl-L-homocysteine + H(+). Functionally, a methylase that recognizes the double-stranded sequence 5'-RGCY-3', methylates C-3 on both strands, and protects the DNA from cleavage by the CviJI endonuclease. In Chlorella (PBCV-IL3A), this protein is Type II methyltransferase M.CviJI.